We begin with the raw amino-acid sequence, 495 residues long: Serine/threonine-protein kinase STN8, chloroplastic (495 aa).

The N-terminal 49 residues, Met1–Arg49, are a transit peptide targeting the chloroplast. The region spanning Phe133–Phe477 is the Protein kinase domain. Residues Leu139–Val147 and Lys186 contribute to the ATP site. Catalysis depends on Asp308, which acts as the Proton acceptor.

Belongs to the protein kinase superfamily. Ser/Thr protein kinase family.

The protein resides in the plastid. It is found in the chloroplast thylakoid. The catalysed reaction is L-seryl-[protein] + ATP = O-phospho-L-seryl-[protein] + ADP + H(+). It carries out the reaction L-threonyl-[protein] + ATP = O-phospho-L-threonyl-[protein] + ADP + H(+). Light-dependent serine/threonine protein kinase that specifically phosphorylates N-terminal threonine residues in psbA/D1, psbD/D2, psbC/CP43 and psbH, which are components of the core antenna complex of photosystem II. Phosphorylation of PSII core components facilitates the exchange of chlorophyll proteins between the grana and the stroma lamellae. Also involved in the phosphorylation of the calcium-sensing receptor (CaS). This is Serine/threonine-protein kinase STN8, chloroplastic (STN8) from Arabidopsis thaliana (Mouse-ear cress).